A 153-amino-acid chain; its full sequence is Pheromone-binding protein Gp-9 (153 aa).

Positions 1 to 19 (MKTFVLHIFIFALVAFASA) are cleaved as a signal peptide. Disulfide bonds link Cys37/Cys77, Cys73/Cys129, and Cys118/Cys138.

This sequence belongs to the PBP/GOBP family. As to quaternary structure, homodimer.

Its subcellular location is the secreted. Colony queen number, a major feature of social organization, is associated with worker genotype for Gp-9. Colonies are headed by either a single reproductive queen (monogyne form) or multiple queens (polygyne form). Differences in worker Gp-9 genotypes between social forms may cause differences in workers' abilities to recognize queens and regulate their numbers. This Solenopsis substituta (Fire ant) protein is Pheromone-binding protein Gp-9.